The following is a 203-amino-acid chain: Large ribosomal subunit protein bL25 (203 aa).

It belongs to the bacterial ribosomal protein bL25 family. CTC subfamily. In terms of assembly, part of the 50S ribosomal subunit; part of the 5S rRNA/L5/L18/L25 subcomplex. Contacts the 5S rRNA. Binds to the 5S rRNA independently of L5 and L18.

Its function is as follows. This is one of the proteins that binds to the 5S RNA in the ribosome where it forms part of the central protuberance. This Wolbachia pipientis wMel protein is Large ribosomal subunit protein bL25.